A 215-amino-acid polypeptide reads, in one-letter code: Oligoribonuclease (215 aa).

The region spanning leucine 5–leucine 170 is the Exonuclease domain. Residue tyrosine 127 is part of the active site. Residues leucine 196 to glycine 215 form a disordered region. A compositionally biased stretch (low complexity) spans alanine 202 to glycine 215.

This sequence belongs to the oligoribonuclease family.

It is found in the cytoplasm. In terms of biological role, 3'-to-5' exoribonuclease specific for small oligoribonucleotides. The chain is Oligoribonuclease from Mycobacterium avium (strain 104).